Here is a 342-residue protein sequence, read N- to C-terminus: Protease HtpX homolog (342 aa).

A run of 2 helical transmembrane segments spans residues 6–26 (TAMLLAFMTALFMGVGFLIGG) and 28–48 (GGMMIALVIAGAMNLFSYWNS). H130 contacts Zn(2+). E131 is a catalytic residue. Zn(2+) is bound at residue H134. The next 2 helical transmembrane spans lie at 145 to 165 (ITATLAGAISMLGNFAFFFGG) and 173 to 193 (GGGIIGPLVAMIVAPFAAMLV). Zn(2+) is bound at residue E202. The segment at 290–342 (PQHSKPAASGPWGSSAERSTDDPWGVKGGASTRSVPKIGRRGKDNDAPKGPWN) is disordered.

This sequence belongs to the peptidase M48B family. It depends on Zn(2+) as a cofactor.

It localises to the cell inner membrane. This chain is Protease HtpX homolog, found in Allorhizobium ampelinum (strain ATCC BAA-846 / DSM 112012 / S4) (Agrobacterium vitis (strain S4)).